Here is a 411-residue protein sequence, read N- to C-terminus: MSSTMSADQSNRARPVIRIKENPEDFTVEEVADIPKSDNGKYTIIKAEIIDWDTNRIVEEIASALRISRKRISYAGTKDKRARKIQYFCINAPVDVSVLAFKGFRIIDRFRSDHYLRLGDLTANHFRIRFQGASDDYIEQRYEKMMECGGFPNYFGQQRFGSRRRNTHDVGRLIVTGRYEDAVRLYLYDERYDIEDYRREFIETLDYNRALEKFPRTLRFERSIIGYYAQHHTFKGAFDALPKNLSIMFVHAYQSYLFNRMLSLRIEKYGLNRAIPGDTAFPVDRYFNPDKSRPVEVNEVNVDTINQLIERDRLRVALPIIGSEVGPDQSDFGEIEKKILEEEHVDRSMFRNSEYPHLSSTGDRRIVSAKPVDFSVSNSVMDFTLGRGIYATTLISTFGDLVDFDAESDGF.

Residue D79 is the Nucleophile of the active site. Residues 150-369 (GFPNYFGQQR…STGDRRIVSA (220 aa)) form the TRUD domain.

This sequence belongs to the pseudouridine synthase TruD family.

The enzyme catalyses uridine(13) in tRNA = pseudouridine(13) in tRNA. In terms of biological role, could be responsible for synthesis of pseudouridine from uracil-13 in transfer RNAs. This Thermoplasma acidophilum (strain ATCC 25905 / DSM 1728 / JCM 9062 / NBRC 15155 / AMRC-C165) protein is Probable tRNA pseudouridine synthase D.